Consider the following 435-residue polypeptide: Tubulin-like protein TubZ (435 aa).

GTP-binding positions include methionine 25–glycine 26, glycine 124–glycine 126, asparagine 185, and asparagine 209. Residues glutamine 403 to phenylalanine 435 are disordered.

It belongs to the FtsZ family. TubZ subfamily. In terms of assembly, polymerizes to form two-stranded filaments and bundles at higher concentration in the presence of GTP. Binds to the TubR-tubC protein DNA complex.

The protein resides in the cytoplasm. It catalyses the reaction GTP + H2O = GDP + phosphate + H(+). Its activity is regulated as follows. GTPase inhibited by GTP-gamma-S, which also stabilizes filaments. Functionally, a tubulin-like, filament forming GTPase; the motor component of the type III plasmid partition system which ensures correct segregation of the pXO1 plasmid. Essential for plasmid replication. The filaments seed from a DNA centromere-like site (tubC)-TubR complex which extends to surround the TubZ filaments. Highly dynamic filaments grow at the plus end and depolymerize at the minus end, a process called treadmilling. TubR-tubC complexes track the depolymerizing minus end of the filament, probably pulling plasmid within the cell. Has a high GTPase activity; in the presence of GTP assembles into dynamic filaments which bind almost exclusively GDP. Filament formation is cooperative, requiring a critical concentration. Formation occurs very quickly and is followed by disassembly as GTP is consumed. Small amounts of GTP-gamma-S stabilize filaments. Has high GTP and dGTPase activity, 6-fold lower ATPase activity. Forms filaments in the presence of ATP that also disassemble. Weakly binds DNA in a GTP-dependent, non-sequence-specific manner; GTP hydrolysis is not required for DNA-binding. The sequence is that of Tubulin-like protein TubZ from Bacillus anthracis.